The chain runs to 351 residues: Delta(7)-sterol 5(6)-desaturase (351 aa).

3 helical membrane-spanning segments follow: residues 88–108, 136–156, and 173–193; these read LSLF…VASF, GLGA…LELH, and VRLA…IYLL. The Fatty acid hydroxylase domain maps to 180 to 305; the sequence is LFFILFTDFG…FTTLWDRLGG (126 aa). Positions 194–198 match the Histidine box-1 motif; sequence HRWLH. The short motif at 207–211 is the Histidine box-2 element; it reads HKKHH. The chain crosses the membrane as a helical span at residues 237 to 257; sequence HLFPMLFPLHKVSYLVLFTFV. Positions 282–286 match the Histidine box-3 motif; it reads HTVHH.

The protein belongs to the sterol desaturase family. Fe cation serves as cofactor.

It localises to the endoplasmic reticulum membrane. It catalyses the reaction a Delta(7)-sterol + 2 Fe(II)-[cytochrome b5] + O2 + 2 H(+) = a Delta(5),Delta(7)-sterol + 2 Fe(III)-[cytochrome b5] + 2 H2O. It functions in the pathway steroid metabolism; ergosterol biosynthesis; ergosterol from zymosterol: step 3/5. Functionally, catalyzes the introduction of a C-5 double bond in the B ring of ergosterol. May contribute to the regulation of ergosterol biosynthesis. The protein is Delta(7)-sterol 5(6)-desaturase (ERG3) of Eremothecium gossypii (strain ATCC 10895 / CBS 109.51 / FGSC 9923 / NRRL Y-1056) (Yeast).